A 552-amino-acid polypeptide reads, in one-letter code: Undecaprenyl phosphate-alpha-4-amino-4-deoxy-L-arabinose arabinosyl transferase (552 aa).

Helical transmembrane passes span 4–24, 81–101, 113–133, 176–196, 207–227, 255–275, 289–309, 313–333, 351–371, 384–404, and 411–431; these read IAGWFTLAVLFVLYYIVPLPG, FAVRFGAVLATVLSALLVFWL, VVAVLIYLTSFLVYGVGSYAV, FMTKGFLALAIPVIAVLPWVI, FGPLAVLSAILISLPWVLAIA, APFWYYLPILLIGLLPWLGLL, QGGDFYLLGWAVMPFLLFSIA, LPTYILPCFAPLAILMAGYVQ, LLVGLGGMAAILLVLAPWGIT, VILGTIAFGVWALFGALSLYH, and WSAACLLGVALLIGTALPQQV.

It belongs to the glycosyltransferase 83 family.

Its subcellular location is the cell inner membrane. The catalysed reaction is 4-amino-4-deoxy-alpha-L-arabinopyranosyl di-trans,octa-cis-undecaprenyl phosphate + lipid IVA = lipid IIA + di-trans,octa-cis-undecaprenyl phosphate.. It participates in lipopolysaccharide metabolism; 4-amino-4-deoxy-beta-L-arabinose-lipid A biosynthesis. Catalyzes the transfer of the L-Ara4N moiety of the glycolipid undecaprenyl phosphate-alpha-L-Ara4N to lipid A. The modified arabinose is attached to lipid A and is required for resistance to polymyxin and cationic antimicrobial peptides. The polypeptide is Undecaprenyl phosphate-alpha-4-amino-4-deoxy-L-arabinose arabinosyl transferase (Edwardsiella ictaluri (strain 93-146)).